The sequence spans 227 residues: UPF0758 protein PG_0894 (227 aa).

The 124-residue stretch at 104–227 (SITDSRMAYR…YFSFADEGLL (124 aa)) folds into the MPN domain. H175, H177, and D188 together coordinate Zn(2+). A JAMM motif motif is present at residues 175–188 (HNHPSGTVRPSEQD).

The protein belongs to the UPF0758 family.

This Porphyromonas gingivalis (strain ATCC BAA-308 / W83) protein is UPF0758 protein PG_0894.